Reading from the N-terminus, the 112-residue chain is Small ribosomal subunit protein eS24 (112 aa).

Residues 88-112 (RGMAGEEEGNADAQDAPSGDAAEAS) form a disordered region.

This sequence belongs to the eukaryotic ribosomal protein eS24 family.

The polypeptide is Small ribosomal subunit protein eS24 (Methanospirillum hungatei JF-1 (strain ATCC 27890 / DSM 864 / NBRC 100397 / JF-1)).